A 142-amino-acid polypeptide reads, in one-letter code: Large ribosomal subunit protein uL16 (142 aa).

The protein belongs to the universal ribosomal protein uL16 family. Part of the 50S ribosomal subunit.

Binds 23S rRNA and is also seen to make contacts with the A and possibly P site tRNAs. The polypeptide is Large ribosomal subunit protein uL16 (Gemmatimonas aurantiaca (strain DSM 14586 / JCM 11422 / NBRC 100505 / T-27)).